The chain runs to 489 residues: Phenylalanine--tRNA ligase alpha subunit (489 aa).

L-phenylalanine is bound by residues T316, 355–357 (QLD), F395, and F420.

Belongs to the class-II aminoacyl-tRNA synthetase family. Phe-tRNA synthetase alpha subunit type 2 subfamily. Tetramer of two alpha and two beta subunits. Requires Mg(2+) as cofactor.

Its subcellular location is the cytoplasm. The catalysed reaction is tRNA(Phe) + L-phenylalanine + ATP = L-phenylalanyl-tRNA(Phe) + AMP + diphosphate + H(+). In Pyrobaculum aerophilum (strain ATCC 51768 / DSM 7523 / JCM 9630 / CIP 104966 / NBRC 100827 / IM2), this protein is Phenylalanine--tRNA ligase alpha subunit.